Reading from the N-terminus, the 212-residue chain is MPTSYGYTTLLKTTLVCCLLTALVSIFLPALLPLTATGSAAVIIFTLYFFRDPERRIPLDQQVIVAPADGKILLIQPLDHAFTGNDSTLVSIFMSPFNVHVNRIPLDGTIVHLRYVPGKFLMAFDNRSMESNEKMEIGIDNGSLRVLFIQVAGFLARRIVCPLHRNESVLSGKRFGMIKFGSRVDMILPAAVKIMVQSGQKTCAGETIIGRY.

The active-site Schiff-base intermediate with substrate; via pyruvic acid is S182. Residue S182 is modified to Pyruvic acid (Ser); by autocatalysis.

This sequence belongs to the phosphatidylserine decarboxylase family. PSD-A subfamily. In terms of assembly, heterodimer of a large membrane-associated beta subunit and a small pyruvoyl-containing alpha subunit. It depends on pyruvate as a cofactor. Post-translationally, is synthesized initially as an inactive proenzyme. Formation of the active enzyme involves a self-maturation process in which the active site pyruvoyl group is generated from an internal serine residue via an autocatalytic post-translational modification. Two non-identical subunits are generated from the proenzyme in this reaction, and the pyruvate is formed at the N-terminus of the alpha chain, which is derived from the carboxyl end of the proenzyme. The post-translation cleavage follows an unusual pathway, termed non-hydrolytic serinolysis, in which the side chain hydroxyl group of the serine supplies its oxygen atom to form the C-terminus of the beta chain, while the remainder of the serine residue undergoes an oxidative deamination to produce ammonia and the pyruvoyl prosthetic group on the alpha chain.

It localises to the cell membrane. It carries out the reaction a 1,2-diacyl-sn-glycero-3-phospho-L-serine + H(+) = a 1,2-diacyl-sn-glycero-3-phosphoethanolamine + CO2. It functions in the pathway phospholipid metabolism; phosphatidylethanolamine biosynthesis; phosphatidylethanolamine from CDP-diacylglycerol: step 2/2. Functionally, catalyzes the formation of phosphatidylethanolamine (PtdEtn) from phosphatidylserine (PtdSer). This is Phosphatidylserine decarboxylase proenzyme from Chlorobium phaeobacteroides (strain DSM 266 / SMG 266 / 2430).